Reading from the N-terminus, the 416-residue chain is Deferrochelatase (416 aa).

Residues 1–28 (MSDEQKKPEQIHRRDILKWGAMAGAAVA) constitute a signal peptide (tat-type signal). Residue 241–243 (GTG) participates in heme b binding. Positions 293–318 (QEDTFGRRKSSGAPFGQKKETDPVKL) are disordered. Positions 326 and 339 each coordinate heme b.

Belongs to the DyP-type peroxidase family. Component of the iron transporter efeUOB/M complex composed of EfeU, EfeM and EfeB; EfeU is essential for the complex formation. The cofactor is heme b. Exported by the Tat system. The position of the signal peptide cleavage has not been experimentally proven.

The protein resides in the secreted. It is found in the cell membrane. It catalyses the reaction heme b + 2 H(+) = protoporphyrin IX + Fe(2+). The catalysed reaction is 2 Fe(2+) + H2O2 + 2 H(+) = 2 Fe(3+) + 2 H2O. Involved in the recovery of exogenous heme iron. Extracts iron from heme while preserving the protoporphyrin ring intact. Part of the iron transporter system efeUOB/M involved in iron import. Catalyzes the peroxide-mediated oxidation of Fe(2+) into Fe(3+); EfeM binds Fe(3+) and delivers it to the cell membrane permease EfeU. This chain is Deferrochelatase, found in Bacillus subtilis (strain 168).